The sequence spans 611 residues: Chaperonin 60 subunit beta 4, chloroplastic (611 aa).

The transit peptide at 1-37 directs the protein to the chloroplast; sequence MAFSQAALSALPLSDRTFRKKPSSSSSSSPNFVLRVR. A coiled-coil region spans residues 377 to 480; the sequence is QKAVDERVSQ…LDNTEQKIGA (104 aa). Residues 574–595 are disordered; that stretch reads INPPLPTSSPATSSMFPDRKLP.

Belongs to the chaperonin (HSP60) family. As to quaternary structure, part of the Cpn60 complex composed of 7 alpha and 7 beta subunits. Can also form a complex composed of 14 beta subunits only. Both complexes show ATPase activity. The Cpn60 complex interacts with the Cpn10 complex. Interacts with NDHH.

It is found in the plastid. The protein localises to the chloroplast stroma. In terms of biological role, involved specifically in the folding of NDHH, a subunit of the chloroplast NADH dehydrogenase-like complex (NDH). In Arabidopsis thaliana (Mouse-ear cress), this protein is Chaperonin 60 subunit beta 4, chloroplastic (CPN60B4).